The primary structure comprises 1019 residues: Insulin-degrading enzyme (1019 aa).

Residue H108 participates in Zn(2+) binding. The active-site Proton acceptor is E111. Residues H112 and E189 each contribute to the Zn(2+) site. K192 bears the N6-succinyllysine mark. Position 359–363 (359–363 (LVGGQ)) interacts with substrate. R429 serves as a coordination point for ATP. At K697 the chain carries N6-succinyllysine. Positions 853-858 (EKPPHY) match the SlyX motif motif. An ATP-binding site is contributed by 895-901 (DKPKKLS).

It belongs to the peptidase M16 family. As to quaternary structure, homodimer. Can also form homotetramers. Zn(2+) serves as cofactor. Detected in brain and liver (at protein level). Detected in liver.

Its subcellular location is the cytoplasm. It is found in the cytosol. It localises to the cell membrane. The protein localises to the secreted. It catalyses the reaction Degradation of insulin, glucagon and other polypeptides. No action on proteins.. Its activity is regulated as follows. Activated by ATP, other nucleotide triphosphates and small peptides. Inhibited by bacitracin. In terms of biological role, plays a role in the cellular breakdown of insulin, APP peptides, IAPP peptides, natriuretic peptides, glucagon, bradykinin, kallidin, and other peptides, and thereby plays a role in intercellular peptide signaling. Substrate binding induces important conformation changes, making it possible to bind and degrade larger substrates, such as insulin. Contributes to the regulation of peptide hormone signaling cascades and regulation of blood glucose homeostasis via its role in the degradation of insulin, glucagon and IAPP. Plays a role in the degradation and clearance of APP-derived amyloidogenic peptides that are secreted by neurons and microglia. Degrades the natriuretic peptides ANP, BNP and CNP, inactivating their ability to raise intracellular cGMP. Also degrades an aberrant frameshifted 40-residue form of NPPA (fsNPPA) which is associated with familial atrial fibrillation in heterozygous patients. Involved in antigen processing. Produces both the N terminus and the C terminus of MAGEA3-derived antigenic peptide (EVDPIGHLY) that is presented to cytotoxic T lymphocytes by MHC class I. The protein is Insulin-degrading enzyme (Ide) of Mus musculus (Mouse).